The primary structure comprises 283 residues: uncharacterized protein (283 aa).

Residues 208–232 are compositionally biased toward basic and acidic residues; the sequence is SMENKVNETQNSKEDEKKKNDGDGK. A disordered region spans residues 208-237; that stretch reads SMENKVNETQNSKEDEKKKNDGDGKRSKKK.

This is an uncharacterized protein from Saccharomyces cerevisiae (strain ATCC 204508 / S288c) (Baker's yeast).